Consider the following 250-residue polypeptide: Small ribosomal subunit protein uS3 (250 aa).

The 73-residue stretch at 39-111 (IRQLINNFSK…DINLNILEVK (73 aa)) folds into the KH type-2 domain.

It belongs to the universal ribosomal protein uS3 family. As to quaternary structure, part of the 30S ribosomal subunit. Forms a tight complex with proteins S10 and S14.

Functionally, binds the lower part of the 30S subunit head. Binds mRNA in the 70S ribosome, positioning it for translation. This chain is Small ribosomal subunit protein uS3, found in Phytoplasma australiense.